Consider the following 142-residue polypeptide: Putative pre-16S rRNA nuclease (142 aa).

It belongs to the YqgF nuclease family.

The protein resides in the cytoplasm. Could be a nuclease involved in processing of the 5'-end of pre-16S rRNA. This is Putative pre-16S rRNA nuclease from Staphylococcus epidermidis (strain ATCC 35984 / DSM 28319 / BCRC 17069 / CCUG 31568 / BM 3577 / RP62A).